Here is a 416-residue protein sequence, read N- to C-terminus: Adipocyte plasma membrane-associated protein (416 aa).

At 1 to 39 (MNEPEGLRFRRLNRPQIITDELQEPQYKGTSTYSGKVFR) the chain is on the cytoplasmic side. Residues 40-60 (VILVTLGGCLILPLLVVFFLL) traverse the membrane as a helical segment. At 61 to 412 (ESPIHPELLS…FRSPYLCKLD (352 aa)) the chain is on the extracellular side. An N-linked (GlcNAc...) asparagine glycan is attached at N160.

The protein belongs to the strictosidine synthase family.

The protein localises to the membrane. The sequence is that of Adipocyte plasma membrane-associated protein (apmap) from Salmo salar (Atlantic salmon).